We begin with the raw amino-acid sequence, 110 residues long: MNQQNQKISNPQTPVPTTSEMNDRDFVNELLTTEKYMTTAYCTALHEFSHESLYQDIQSIFDESQKAQRKLYDLMFQYGWYSVEAEDSQKLQQSYQKFQQTIQQQSPYQQ.

Residues 1 to 20 are compositionally biased toward polar residues; the sequence is MNQQNQKISNPQTPVPTTSE. The segment at 1 to 24 is disordered; it reads MNQQNQKISNPQTPVPTTSEMNDR.

This is an uncharacterized protein from Bacillus subtilis (strain 168).